Consider the following 141-residue polypeptide: Guanyl-specific ribonuclease Sa3 (141 aa).

Residues 1–36 (MRIPPRLVALAGAAAVAATLIAGPVAAAAPASHAVA) constitute a signal peptide (or 43). Cys52 and Cys141 are joined by a disulfide. Residue Glu99 is the Proton acceptor of the active site. His130 acts as the Proton donor in catalysis.

The protein belongs to the ribonuclease N1/T1 family.

It localises to the secreted. The catalysed reaction is [RNA] containing guanosine + H2O = an [RNA fragment]-3'-guanosine-3'-phosphate + a 5'-hydroxy-ribonucleotide-3'-[RNA fragment].. In Kitasatospora aureofaciens (Streptomyces aureofaciens), this protein is Guanyl-specific ribonuclease Sa3 (rnaSA3).